The chain runs to 340 residues: Ketol-acid reductoisomerase (NADP(+)) (340 aa).

Residues 1–182 (MRVYYDRDCD…GGGRSGIIET (182 aa)) form the KARI N-terminal Rossmann domain. NADP(+)-binding positions include 24 to 27 (YGSQ), arginine 48, serine 51, serine 53, and 83 to 86 (DELQ). Histidine 108 is a catalytic residue. An NADP(+)-binding site is contributed by glycine 134. A KARI C-terminal knotted domain is found at 183–329 (NFREECETDL…AKLREMMPWI (147 aa)). Positions 191, 195, 227, and 231 each coordinate Mg(2+). Position 252 (serine 252) interacts with substrate.

The protein belongs to the ketol-acid reductoisomerase family. The cofactor is Mg(2+).

The enzyme catalyses (2R)-2,3-dihydroxy-3-methylbutanoate + NADP(+) = (2S)-2-acetolactate + NADPH + H(+). It catalyses the reaction (2R,3R)-2,3-dihydroxy-3-methylpentanoate + NADP(+) = (S)-2-ethyl-2-hydroxy-3-oxobutanoate + NADPH + H(+). Its pathway is amino-acid biosynthesis; L-isoleucine biosynthesis; L-isoleucine from 2-oxobutanoate: step 2/4. It functions in the pathway amino-acid biosynthesis; L-valine biosynthesis; L-valine from pyruvate: step 2/4. Involved in the biosynthesis of branched-chain amino acids (BCAA). Catalyzes an alkyl-migration followed by a ketol-acid reduction of (S)-2-acetolactate (S2AL) to yield (R)-2,3-dihydroxy-isovalerate. In the isomerase reaction, S2AL is rearranged via a Mg-dependent methyl migration to produce 3-hydroxy-3-methyl-2-ketobutyrate (HMKB). In the reductase reaction, this 2-ketoacid undergoes a metal-dependent reduction by NADPH to yield (R)-2,3-dihydroxy-isovalerate. The polypeptide is Ketol-acid reductoisomerase (NADP(+)) (Ruegeria sp. (strain TM1040) (Silicibacter sp.)).